Consider the following 371-residue polypeptide: N-acetyldiaminopimelate deacetylase (371 aa).

The active site involves aspartate 68. Residue glutamate 127 is the Proton acceptor of the active site.

It belongs to the peptidase M20A family. N-acetyldiaminopimelate deacetylase subfamily.

It catalyses the reaction N-acetyl-(2S,6S)-2,6-diaminopimelate + H2O = (2S,6S)-2,6-diaminopimelate + acetate. Its pathway is amino-acid biosynthesis; L-lysine biosynthesis via DAP pathway; LL-2,6-diaminopimelate from (S)-tetrahydrodipicolinate (acetylase route): step 3/3. Its function is as follows. Catalyzes the conversion of N-acetyl-diaminopimelate to diaminopimelate and acetate. The polypeptide is N-acetyldiaminopimelate deacetylase (Listeria monocytogenes serotype 4a (strain HCC23)).